A 358-amino-acid chain; its full sequence is uncharacterized protein (358 aa).

The protein belongs to the SMP-30/CGR1 family.

This is an uncharacterized protein from Saccharomyces cerevisiae (strain ATCC 204508 / S288c) (Baker's yeast).